The chain runs to 302 residues: Phospho-N-acetylmuramoyl-pentapeptide-transferase (302 aa).

Helical transmembrane passes span 1 to 21 (MIAA…KLFR), 42 to 62 (GTPT…GMIS), 67 to 87 (MVLL…FLSV), 95 to 115 (LKTY…LLLI), 123 to 143 (FFGS…LVIV), 154 to 174 (GLDG…WFFL), 178 to 198 (GVSE…LVFN), 204 to 224 (IFMG…VSVL), 229 to 249 (FYLV…ILQV), and 279 to 299 (IVAV…EIFG).

This sequence belongs to the glycosyltransferase 4 family. MraY subfamily. Mg(2+) serves as cofactor.

It is found in the cell inner membrane. The catalysed reaction is UDP-N-acetyl-alpha-D-muramoyl-L-alanyl-gamma-D-glutamyl-meso-2,6-diaminopimeloyl-D-alanyl-D-alanine + di-trans,octa-cis-undecaprenyl phosphate = di-trans,octa-cis-undecaprenyl diphospho-N-acetyl-alpha-D-muramoyl-L-alanyl-D-glutamyl-meso-2,6-diaminopimeloyl-D-alanyl-D-alanine + UMP. Its pathway is cell wall biogenesis; peptidoglycan biosynthesis. Its function is as follows. Catalyzes the initial step of the lipid cycle reactions in the biosynthesis of the cell wall peptidoglycan: transfers peptidoglycan precursor phospho-MurNAc-pentapeptide from UDP-MurNAc-pentapeptide onto the lipid carrier undecaprenyl phosphate, yielding undecaprenyl-pyrophosphoryl-MurNAc-pentapeptide, known as lipid I. This chain is Phospho-N-acetylmuramoyl-pentapeptide-transferase, found in Thermotoga maritima (strain ATCC 43589 / DSM 3109 / JCM 10099 / NBRC 100826 / MSB8).